Consider the following 225-residue polypeptide: Pathogenesis-related thaumatin-like protein 3.8 (225 aa).

An N-terminal signal peptide occupies residues methionine 1 to alanine 26. Intrachain disulfides connect cysteine 35–cysteine 224, cysteine 76–cysteine 86, cysteine 91–cysteine 97, cysteine 139–cysteine 213, cysteine 144–cysteine 197, cysteine 152–cysteine 162, cysteine 166–cysteine 175, and cysteine 176–cysteine 184. Asparagine 188 carries N-linked (GlcNAc...) asparagine glycosylation.

The protein belongs to the thaumatin family.

Functionally, may be involved in disease resistance. The chain is Pathogenesis-related thaumatin-like protein 3.8 from Cryptomeria japonica (Japanese cedar).